The sequence spans 46 residues: Myoregulin (46 aa).

Residues 1 to 21 lie on the Cytoplasmic side of the membrane; it reads MSGKSWVLISTTSPQSLEDEI. The chain crosses the membrane as a helical span at residues 22-42; that stretch reads LGRLLKILFVLFVDLMSIMYV. The Lumenal portion of the chain corresponds to 43–46; the sequence is VITS.

In terms of assembly, homooligomer. Monomer. Interacts with ATP2A1/SERCA1. Interacts as a monomer with ATP2A2/SERCA2; the interaction inhibits ATP2A2 activity. In terms of tissue distribution, specifically expressed in all skeletal muscles. Detected in both fast- and slow-type skeletal muscle. Not expressed in cardiac or smooth muscles.

The protein resides in the sarcoplasmic reticulum membrane. Functionally, inhibits the activity of ATP2A1/SERCA1 ATPase in sarcoplasmic reticulum by decreasing the apparent affinity of the ATPase for Ca(2+), thereby acting as a key regulator of skeletal muscle activity. Its high expression in adult skeletal muscle, suggests that it constitutes the predominant regulator of ATP2A1/SERCA1 in adult skeletal muscle. Also inhibits the activity of ATP2A2/SERCA2 and ATP2A3/SERCA3. The chain is Myoregulin from Mus musculus (Mouse).